The chain runs to 148 residues: Large ribosomal subunit protein bL9 (148 aa).

Belongs to the bacterial ribosomal protein bL9 family.

Its function is as follows. Binds to the 23S rRNA. The protein is Large ribosomal subunit protein bL9 of Pseudomonas fluorescens (strain SBW25).